We begin with the raw amino-acid sequence, 469 residues long: Calcium-binding mitochondrial carrier protein SCaMC-2 (469 aa).

At 1–189 the chain is on the mitochondrial intermembrane side; sequence MLCLCLYVPL…ERQTGMWWRH (189 aa). 3 EF-hand domains span residues 47–80, 78–113, and 114–149; these read TYRQ…QDHE, DHEK…LGVK, and ISEQ…HPVE. The Ca(2+) site is built by Asp60, Asp62, Asp64, Gln66, and Glu71. Solcar repeat units follow at residues 184-270, 278-363, and 375-463; these read GMWW…IKRL, LRIH…LKNA, and PGVF…LKIT. A helical membrane pass occupies residues 190–207; that stretch reads LVAGGGAGAVSRTCTAPL. The Mitochondrial matrix portion of the chain corresponds to 208-244; the sequence is DRLKVLMQVHASRSNNMCIVGGFTQMIREGGARSLWR. The chain crosses the membrane as a helical span at residues 245–264; the sequence is GNGINVLKIAPESAIKFMAY. Residues 265-287 lie on the Mitochondrial intermembrane side of the membrane; the sequence is EQIKRLIGSDQETLRIHERLVAG. A helical membrane pass occupies residues 288–301; sequence SLAGAIAQSSIYPM. The Mitochondrial matrix portion of the chain corresponds to 302–337; the sequence is EVLKTRMALRKTGQYSGMLDCARKILAREGMAAFYK. The helical transmembrane segment at 338–357 threads the bilayer; it reads GYVPNMLGIIPYAGIDLAVY. Over 358–380 the chain is Mitochondrial intermembrane; that stretch reads ETLKNAWLQRYAVNSADPGVFVL. Residues 381-398 traverse the membrane as a helical segment; that stretch reads LACGTMSSTCGQLASYPL. Topologically, residues 399 to 437 are mitochondrial matrix; that stretch reads ALVRTRMQAQASMEGAPEVTMSSLFKQILRTEGAFGLYR. The helical transmembrane segment at 438–457 threads the bilayer; the sequence is GLAPNFMKVIPAVSISYVVY. At 458-469 the chain is on the mitochondrial intermembrane side; it reads ENLKITLGVQSR.

The protein belongs to the mitochondrial carrier (TC 2.A.29) family.

It localises to the mitochondrion inner membrane. Calcium-dependent mitochondrial solute carrier. Mitochondrial solute carriers shuttle metabolites, nucleotides, and cofactors through the mitochondrial inner membrane. May act as a ATP-Mg/Pi exchanger that mediates the transport of Mg-ATP in exchange for phosphate, catalyzing the net uptake or efflux of adenine nucleotides into or from the mitochondria. This Bos taurus (Bovine) protein is Calcium-binding mitochondrial carrier protein SCaMC-2 (SLC25A25).